Consider the following 374-residue polypeptide: Serine/threonine-protein kinase-transforming protein mos (374 aa).

The Protein kinase domain maps to 94–370; sequence VCLMHRLGSG…LLQRDLKAFR (277 aa). ATP contacts are provided by residues 100–108 and lysine 121; that span reads LGSGGFGSV. The Proton acceptor role is filled by aspartate 229.

Belongs to the protein kinase superfamily. Ser/Thr protein kinase family.

It catalyses the reaction L-seryl-[protein] + ATP = O-phospho-L-seryl-[protein] + ADP + H(+). The enzyme catalyses L-threonyl-[protein] + ATP = O-phospho-L-threonyl-[protein] + ADP + H(+). The polypeptide is Serine/threonine-protein kinase-transforming protein mos (V-MOS) (Mus musculus (Mouse)).